The following is a 290-amino-acid chain: 4-hydroxybenzoate octaprenyltransferase (290 aa).

8 helical membrane-spanning segments follow: residues 33 to 53, 91 to 111, 116 to 136, 138 to 158, 165 to 185, 212 to 232, 237 to 257, and 269 to 289; these read LAAL…AVFV, LGVR…FVLV, WEAV…PFTK, FFAM…VIAF, VPAT…AYDT, VAAI…VLAP, WPLW…FTLI, and FSKS…GYLL.

The protein belongs to the UbiA prenyltransferase family. It depends on Mg(2+) as a cofactor.

Its subcellular location is the cell inner membrane. The enzyme catalyses all-trans-octaprenyl diphosphate + 4-hydroxybenzoate = 4-hydroxy-3-(all-trans-octaprenyl)benzoate + diphosphate. It participates in cofactor biosynthesis; ubiquinone biosynthesis. Catalyzes the prenylation of para-hydroxybenzoate (PHB) with an all-trans polyprenyl group. Mediates the second step in the final reaction sequence of ubiquinone-8 (UQ-8) biosynthesis, which is the condensation of the polyisoprenoid side chain with PHB, generating the first membrane-bound Q intermediate 3-octaprenyl-4-hydroxybenzoate. The polypeptide is 4-hydroxybenzoate octaprenyltransferase (Acidovorax ebreus (strain TPSY) (Diaphorobacter sp. (strain TPSY))).